The chain runs to 68 residues: Antimicrobial peptide VpCT3 (68 aa).

Residues 1–23 form the signal peptide; sequence MKTQIVILIVAVLVLQLVSQSDA. Position 36 is a leucine amide (leucine 36). Residues 37–68 constitute a propeptide that is removed on maturation; the sequence is GKRGLKNLDQYNDLFDGEISDADIKFLQDLMR.

The protein belongs to the non-disulfide-bridged peptide (NDBP) superfamily. Short antimicrobial peptide (group 4) family. Expressed by the venom gland.

The protein localises to the secreted. The protein resides in the target cell membrane. Antimicrobial peptide with weak activity against all bacteria tested (MIC&gt;100 uM) and all yeasts tested (MIC&gt;200 uM). Also provokes weak hemolysis on human erythrocytes (HC(50)=83.7 uM). This Mesomexovis punctatus (Scorpion) protein is Antimicrobial peptide VpCT3.